A 343-amino-acid polypeptide reads, in one-letter code: DNA polymerase III subunit delta (343 aa).

Domain regions lie at residues 1–140 (MIRL…VTCQ), 141–210 (TPEQ…NDAA), and 211–343 (HFTP…FIDG).

Belongs to the DNA polymerase HolA subunit family. As to quaternary structure, the DNA polymerase III holoenzyme complex contains at least 10 different subunits organized into 3 functionally essential subassemblies: the Pol III core, the beta sliding clamp processivity factor and the clamp-loading complex. The Pol III core (subunits alpha, epsilon and theta) contains the polymerase and the 3'-5' exonuclease proofreading activities. The polymerase is tethered to the template via the dimeric beta sliding clamp processivity factor. The clamp-loading complex (also called gamma complex) assembles the beta sliding clamp onto the primed template and plays a central role in the organization and communication at the replication fork. The clamp-loading complex contains delta, delta', psi and chi, and 3 copies of either or both of two different DnaX proteins, gamma and tau. The DNA replisome complex has a single clamp loader (3 tau and 1 each of delta, delta', psi and chi subunits) which binds 3 Pol III cores (1 core on the leading strand and 2 on the lagging strand) each with a beta sliding clamp dimer. Additional proteins in the replisome are other copies of gamma, psi and chi, Ssb, DNA helicase and RNA primase. The clamp loader hydrolyzes ATP to assemble the beta processivity factor onto the primed template and plays a central role in the organization and communication at the replication fork; the minimal complex to load the beta sliding clamp on DNA is delta, delta', gamma.

The catalysed reaction is DNA(n) + a 2'-deoxyribonucleoside 5'-triphosphate = DNA(n+1) + diphosphate. Part of the beta sliding clamp loading complex, which hydrolyzes ATP to load the beta clamp onto primed DNA to form the DNA replication pre-initiation complex. DNA polymerase III is a complex, multichain enzyme responsible for most of the replicative synthesis in bacteria. This DNA polymerase also exhibits 3'-5' exonuclease activity. The delta subunit is the wrench that will open the beta subunit dimer, which has been modeled to leave a gap large enough for ssDNA to pass through. The gamma complex (gamma(3),delta,delta') is thought to load beta dimers onto DNA by binding ATP which alters the complex's conformation so it can bind beta sliding clamp dimers and open them at one interface. Primed DNA is recognized, ATP is hydrolyzed releasing the gamma complex and closing the beta sliding clamp ring around the primed DNA. In Escherichia coli (strain K12), this protein is DNA polymerase III subunit delta (holA).